Here is a 155-residue protein sequence, read N- to C-terminus: UPF0178 protein TDE_2151 (155 aa).

This sequence belongs to the UPF0178 family.

This chain is UPF0178 protein TDE_2151, found in Treponema denticola (strain ATCC 35405 / DSM 14222 / CIP 103919 / JCM 8153 / KCTC 15104).